Here is a 207-residue protein sequence, read N- to C-terminus: Ion-translocating oxidoreductase complex subunit G (207 aa).

A helical membrane pass occupies residues G11–L31. T175 carries the FMN phosphoryl threonine modification.

It belongs to the RnfG family. The complex is composed of six subunits: RnfA, RnfB, RnfC, RnfD, RnfE and RnfG. It depends on FMN as a cofactor.

It localises to the cell inner membrane. Functionally, part of a membrane-bound complex that couples electron transfer with translocation of ions across the membrane. This Haemophilus influenzae (strain PittEE) protein is Ion-translocating oxidoreductase complex subunit G.